Consider the following 259-residue polypeptide: Protein IQ-DOMAIN 10 (259 aa).

Positions 18-39 (KNKSNRGNVHSETSNRVKPVES) are disordered. Residues 50–77 (EVAVIRIQKAFRAFKARKRLCSLKSARR) enclose the IQ domain. The tract at residues 61–71 (RAFKARKRLCS) is calmodulin-binding. A disordered region spans residues 226-259 (KPSKKPEKSSPNNVITKTSAKPDEVGNSKKPGSG).

It belongs to the IQD family. Binds to multiple calmodulin (CaM) in the presence of Ca(2+) and CaM-like proteins.

It localises to the nucleus. The protein resides in the cytoplasm. The protein localises to the cytoskeleton. In terms of biological role, may be involved in cooperative interactions with calmodulins or calmodulin-like proteins. Recruits calmodulin proteins to microtubules, thus being a potential scaffold in cellular signaling and trafficking. May associate with nucleic acids and regulate gene expression at the transcriptional or post-transcriptional level. This chain is Protein IQ-DOMAIN 10, found in Arabidopsis thaliana (Mouse-ear cress).